The following is a 382-amino-acid chain: Succinyl-diaminopimelate desuccinylase (382 aa).

A Zn(2+)-binding site is contributed by His71. Asp73 is a catalytic residue. Asp105 is a Zn(2+) binding site. Glu139 serves as the catalytic Proton acceptor. The Zn(2+) site is built by Glu140, Glu168, and His354.

The protein belongs to the peptidase M20A family. DapE subfamily. As to quaternary structure, homodimer. Requires Zn(2+) as cofactor. It depends on Co(2+) as a cofactor.

The catalysed reaction is N-succinyl-(2S,6S)-2,6-diaminopimelate + H2O = (2S,6S)-2,6-diaminopimelate + succinate. It functions in the pathway amino-acid biosynthesis; L-lysine biosynthesis via DAP pathway; LL-2,6-diaminopimelate from (S)-tetrahydrodipicolinate (succinylase route): step 3/3. In terms of biological role, catalyzes the hydrolysis of N-succinyl-L,L-diaminopimelic acid (SDAP), forming succinate and LL-2,6-diaminopimelate (DAP), an intermediate involved in the bacterial biosynthesis of lysine and meso-diaminopimelic acid, an essential component of bacterial cell walls. The chain is Succinyl-diaminopimelate desuccinylase from Stutzerimonas stutzeri (strain A1501) (Pseudomonas stutzeri).